We begin with the raw amino-acid sequence, 304 residues long: Dihydroorotate dehydrogenase B (NAD(+)), catalytic subunit (304 aa).

FMN contacts are provided by residues Ser-22 and 46–47 (KG). Substrate is bound by residues Lys-46 and 70–74 (NSIGL). 2 residues coordinate FMN: Asn-100 and Asn-128. Asn-128 is a substrate binding site. Cys-131 (nucleophile) is an active-site residue. Positions 166 and 192 each coordinate FMN. 193 to 194 (NT) contributes to the substrate binding site. FMN is bound by residues Gly-218, 244–245 (GG), and 266–267 (GT).

The protein belongs to the dihydroorotate dehydrogenase family. Type 1 subfamily. In terms of assembly, heterotetramer of 2 PyrK and 2 PyrD type B subunits. However, the metal reductase complex seems to be composed of a heterooctamer of 4 PyrK and 4 PyrD subunits. Requires FMN as cofactor.

The protein localises to the cytoplasm. It carries out the reaction (S)-dihydroorotate + NAD(+) = orotate + NADH + H(+). It functions in the pathway pyrimidine metabolism; UMP biosynthesis via de novo pathway; orotate from (S)-dihydroorotate (NAD(+) route): step 1/1. Its function is as follows. Catalyzes the conversion of dihydroorotate to orotate with NAD(+) as electron acceptor. Together with PyrK, also forms a metal reductase complex able to reduce Fe(III)-chelates to Fe(II)-chelates, as well as soluble Cr(VI) and U(VI), using NADH as electron donor. To a lesser extent, can also use NADPH as an electron donor. Is unable to reduce riboflavin and FMN with NADH as electron donor. May have an in vivo role in metal reduction in D.reducens, which is an organism capable of reducing contaminant heavy metals and radionuclides. The polypeptide is Dihydroorotate dehydrogenase B (NAD(+)), catalytic subunit (pyrD) (Desulforamulus reducens (strain ATCC BAA-1160 / DSM 100696 / MI-1) (Desulfotomaculum reducens)).